The chain runs to 433 residues: CinA-like protein (433 aa).

The protein belongs to the CinA family.

This is CinA-like protein from Frankia casuarinae (strain DSM 45818 / CECT 9043 / HFP020203 / CcI3).